A 201-amino-acid chain; its full sequence is MPIVSSAASIQRHPGIQDVAAPTELTSIPSVGEKLGSGSQKDVYHSRQDPRQCICLIRPDTTGIISGNEYAAKELKMTKHLKDLGFPVVDAYALVKYDNKVGIAKDYIHHALDSEDVIHNRKHIPTDMAFNKNVMKDCDEIISRLRTHSLHIEDLQFLIDGYGRVRINDPRDVIRSSPEKSIAKVRELRAIALNNLLDDSD.

The ATP site is built by S39, Q40, K41, D106, I108, and D113. D154 is a catalytic residue. An ATP-binding site is contributed by Q156.

The protein belongs to the HopBF1 family.

The protein resides in the secreted. It is found in the host cell. It carries out the reaction L-seryl-[protein] + ATP = O-phospho-L-seryl-[protein] + ADP + H(+). Its function is as follows. Effector protein that targets and inactivates the plant molecular chaperone HSP90 during infection. HopBF1 is recognized by HSP90 as a host client. As a result, HopBF1 phosphorylates HSP90, leading to the inactivation of the HSP90 ATPase activity and chaperone function. Phosphorylation of HSP90 prevents activation of immune receptors that trigger the hypersensitive response in plants. HopBF1 is sufficient to cause severe disease symptoms in plants infected with P.syringae. In vitro, can phosphorylate the recombinant yeast HSP82 (HSP90) on Ser-99, Triticum aestivum (wheat) HSP90 and human HSP 90-beta, but not the prokaryotic HSP90 orthologs, HtpG from E.coli and P.syringae. Does not act on generic protein kinase substrates such as casein and myelin basic protein, as well as the yeast HSP70s and Bip chaperones. The chain is Type III effector protein HopBF1 from Pseudomonas syringae pv. syringae (strain FF5).